Reading from the N-terminus, the 215-residue chain is MTATASEGDDRIIRESGIDARIALIVQPVLRGIGFRLVRVHLSGQNGLTLQIMAEREDGTMTVEDCEEVSRAVSPALDVDDPIEKAYHLEVSSPGIDRPLVRKSDFVTWTGHLVKMETSVIVADRKRFKGKIAEAGENDVLIERDKAAYGEEPTVRVPYDAIAETRLILTDDLIRDALSKDNRARKEAKKRRGEPDDDVPEGAEADATEEHEQES.

Residues 180-215 (KDNRARKEAKKRRGEPDDDVPEGAEADATEEHEQES) are disordered. Residues 195–207 (PDDDVPEGAEADA) show a composition bias toward acidic residues.

Belongs to the RimP family.

The protein localises to the cytoplasm. In terms of biological role, required for maturation of 30S ribosomal subunits. The chain is Ribosome maturation factor RimP from Mesorhizobium japonicum (strain LMG 29417 / CECT 9101 / MAFF 303099) (Mesorhizobium loti (strain MAFF 303099)).